A 392-amino-acid chain; its full sequence is Tryptophan synthase beta chain (392 aa).

N6-(pyridoxal phosphate)lysine is present on Lys-86.

This sequence belongs to the TrpB family. In terms of assembly, tetramer of two alpha and two beta chains. The cofactor is pyridoxal 5'-phosphate.

The enzyme catalyses (1S,2R)-1-C-(indol-3-yl)glycerol 3-phosphate + L-serine = D-glyceraldehyde 3-phosphate + L-tryptophan + H2O. It functions in the pathway amino-acid biosynthesis; L-tryptophan biosynthesis; L-tryptophan from chorismate: step 5/5. Its function is as follows. The beta subunit is responsible for the synthesis of L-tryptophan from indole and L-serine. This chain is Tryptophan synthase beta chain, found in Methanocorpusculum labreanum (strain ATCC 43576 / DSM 4855 / Z).